The following is a 479-amino-acid chain: Lysosomal protective protein (479 aa).

Residues 1–27 (MFRAALWPPVLLLLQLLLLACAPGGEG) form the signal peptide. Intrachain disulfides connect Cys87–Cys361, Cys239–Cys255, Cys240–Cys245, and Cys280–Cys330. The N-linked (GlcNAc...) asparagine glycan is linked to Asn144. Ser177 is an active-site residue. Asn332 carries N-linked (GlcNAc...) asparagine glycosylation. Catalysis depends on residues Asp399 and His456.

Belongs to the peptidase S10 family. As to quaternary structure, heterodimer of a 32 kDa chain and a 20 kDa chain; disulfide-linked.

The protein resides in the lysosome. The enzyme catalyses Release of a C-terminal amino acid with broad specificity.. In terms of biological role, protective protein appears to be essential for both the activity of beta-galactosidase and neuraminidase, it associates with these enzymes and exerts a protective function necessary for their stability and activity. This protein is also a carboxypeptidase and can deamidate tachykinins. The polypeptide is Lysosomal protective protein (CTSA) (Bos taurus (Bovine)).